Consider the following 945-residue polypeptide: Isoleucine--tRNA ligase 1 (945 aa).

The 'HIGH' region motif lies at 66 to 76 (PYANGDIHLGH). Glu-581 is an L-isoleucyl-5'-AMP binding site. A 'KMSKS' region motif is present at residues 622 to 626 (KMSKS). Lys-625 is a binding site for ATP. Residues Cys-908, Cys-911, Cys-928, and Cys-931 each coordinate Zn(2+).

This sequence belongs to the class-I aminoacyl-tRNA synthetase family. IleS type 1 subfamily. Monomer. Zn(2+) serves as cofactor.

It is found in the cytoplasm. It carries out the reaction tRNA(Ile) + L-isoleucine + ATP = L-isoleucyl-tRNA(Ile) + AMP + diphosphate. Catalyzes the attachment of isoleucine to tRNA(Ile). As IleRS can inadvertently accommodate and process structurally similar amino acids such as valine, to avoid such errors it has two additional distinct tRNA(Ile)-dependent editing activities. One activity is designated as 'pretransfer' editing and involves the hydrolysis of activated Val-AMP. The other activity is designated 'posttransfer' editing and involves deacylation of mischarged Val-tRNA(Ile). The polypeptide is Isoleucine--tRNA ligase 1 (Burkholderia mallei (strain ATCC 23344)).